A 210-amino-acid polypeptide reads, in one-letter code: NAD(P)H-quinone oxidoreductase subunit I (210 aa).

2 4Fe-4S ferredoxin-type domains span residues 55 to 84 (GRIH…VDWV) and 95 to 124 (RNYS…MTEE). 8 residues coordinate [4Fe-4S] cluster: Cys-64, Cys-67, Cys-70, Cys-74, Cys-104, Cys-107, Cys-110, and Cys-114.

It belongs to the complex I 23 kDa subunit family. As to quaternary structure, NDH-1 is composed of at least 11 different subunits. The cofactor is [4Fe-4S] cluster.

The protein resides in the cellular thylakoid membrane. It catalyses the reaction a plastoquinone + NADH + (n+1) H(+)(in) = a plastoquinol + NAD(+) + n H(+)(out). It carries out the reaction a plastoquinone + NADPH + (n+1) H(+)(in) = a plastoquinol + NADP(+) + n H(+)(out). Its function is as follows. NDH-1 shuttles electrons from an unknown electron donor, via FMN and iron-sulfur (Fe-S) centers, to quinones in the respiratory and/or the photosynthetic chain. The immediate electron acceptor for the enzyme in this species is believed to be plastoquinone. Couples the redox reaction to proton translocation, and thus conserves the redox energy in a proton gradient. This is NAD(P)H-quinone oxidoreductase subunit I from Synechococcus sp. (strain CC9902).